The primary structure comprises 217 residues: Ribosomal RNA small subunit methyltransferase G (217 aa).

Residues G79, L84, 130–131 (IE), and R145 each bind S-adenosyl-L-methionine.

The protein belongs to the methyltransferase superfamily. RNA methyltransferase RsmG family.

Its subcellular location is the cytoplasm. It carries out the reaction guanosine(527) in 16S rRNA + S-adenosyl-L-methionine = N(7)-methylguanosine(527) in 16S rRNA + S-adenosyl-L-homocysteine. Its function is as follows. Specifically methylates the N7 position of guanine in position 527 of 16S rRNA. The sequence is that of Ribosomal RNA small subunit methyltransferase G from Hahella chejuensis (strain KCTC 2396).